A 32-amino-acid chain; its full sequence is uncharacterized protein (32 aa).

This is an uncharacterized protein from Ornithodoros (relapsing fever ticks).